The primary structure comprises 421 residues: Hydrolyase poxO (421 aa).

Residue serine 239 is the Nucleophile of the active site.

Belongs to the AB hydrolase superfamily. FUS2 hydrolase family. As to quaternary structure, homodimer.

It participates in secondary metabolite biosynthesis. Functionally, hydrolyase; part of the gene cluster that mediates the biosynthesis of oxaleimides, cytotoxic compounds containing an unusual disubstituted succinimide moiety. The first step of the pathway is provided by the HR-PKS poxF that serves in a new mode of collaborative biosynthesis with the PKS-NRPS poxE, by providing the olefin containing amino acid substrate via the synthesis of an ACP-bound dec-4-enoate. The cytochrome P450 monooxygenase poxM-catalyzed oxidation at the alpha-position creates the enzyme-bound 2-hydroxydec-4-enoyl-ACP thioester, which may be prone to spontaneous hydrolysis to yield 2-hydroxydec-4-enoic acid due to increased electrophilicity of the carbonyl. 2-hydroxydec-4-enoic acid can then be further oxidized by poxM to yield the alpha-ketoacid 2-oxodec-4-enoicacid, which is reductively aminated by the aminotransferase poxL to yield (S,E)-2-aminodec-4-enoic acid. The Hybrid PKS-NRPS synthetase poxE then performs condensation between the octaketide product of its PKS modules and the amino group of (S,E)-2-aminodec-4-enoic acid which is activated and incorporated by the adenylation domain. The resulting aminoacyl product can be cyclized by the Diels-Alderase PoxQ and reductively released by the reductive (R) domain of poxE to yield an aldehyde intermediate. The released aldehyde is then substrate for a Knoevenagel condensation by the hydrolyase poxO followed by an oxidation at the 5-position of the pyrrolidone ring. The presence of the olefin from the amino acid building block allows for migration of the substituted allyl group to occur. This allylic transposition reaction takes place in a conjugate addition, semipinacol-like fashion to yield a succinimide intermediate. Iterative two-electron oxidations of the C7 methyl of the succinimide intermediate to the carboxylic acid can be catalyzed by one of two remaining cytochrome P450 monooxygenasess poxC or poxD to yield oxaleimide A. Subsequent oxidation yields the maleimide scaffold oxaleimide I. Both oxaleimide A and oxaleimide I can undergo oxidative modifications in the decalin ring to yield the series of products oxaleimides B to H. The chain is Hydrolyase poxO from Penicillium oxalicum.